Here is a 147-residue protein sequence, read N- to C-terminus: Nucleoside diphosphate kinase (147 aa).

Residues Lys-9, Phe-57, Arg-85, Thr-91, Arg-102, and Asn-112 each coordinate ATP. Catalysis depends on His-115, which acts as the Pros-phosphohistidine intermediate.

Belongs to the NDK family. In terms of assembly, homotetramer. Mg(2+) is required as a cofactor.

The protein resides in the cytoplasm. It catalyses the reaction a 2'-deoxyribonucleoside 5'-diphosphate + ATP = a 2'-deoxyribonucleoside 5'-triphosphate + ADP. The enzyme catalyses a ribonucleoside 5'-diphosphate + ATP = a ribonucleoside 5'-triphosphate + ADP. Functionally, major role in the synthesis of nucleoside triphosphates other than ATP. The ATP gamma phosphate is transferred to the NDP beta phosphate via a ping-pong mechanism, using a phosphorylated active-site intermediate. In Listeria welshimeri serovar 6b (strain ATCC 35897 / DSM 20650 / CCUG 15529 / CIP 8149 / NCTC 11857 / SLCC 5334 / V8), this protein is Nucleoside diphosphate kinase.